Consider the following 114-residue polypeptide: Ig kappa chain V-I region S107A (114 aa).

Positions 1 to 23 (DIVMTQSPTFLAVTASKKVTISC) are framework-1. C23 and C94 are disulfide-bonded. The interval 24–40 (TASESLYSSKHKVHYLA) is complementarity-determining-1. Positions 41-55 (WYQKKPEQSPKLLIY) are framework-2. Positions 56 to 62 (GASNRYI) are complementarity-determining-2. Residues 63-94 (GVPDRFTGSGSGTDFTLTISSVQVEDLTHYYC) form a framework-3 region. Positions 95 to 103 (AQFYSYPLT) are complementarity-determining-3. A framework-4 region spans residues 104–113 (FGAGTKLELK).

Its function is as follows. Anti-phosphocholine antibody. The sequence is that of Ig kappa chain V-I region S107A (Igkv7-33) from Mus musculus (Mouse).